The chain runs to 485 residues: Ribosomal protein S6 kinase beta-2 (485 aa).

The tract at residues 1–26 (MAAVFDLDLETEEGSEGEGEPEFSPA) is disordered. The segment covering 7 to 21 (LDLETEEGSEGEGEP) has biased composition (acidic residues). S15 bears the Phosphoserine mark. One can recognise a Protein kinase domain in the interval 67–328 (FELLSVLGKG…AADVQRHPFF (262 aa)). Residues 73 to 81 (LGKGGYGKV) and K99 each bind ATP. The Proton acceptor role is filled by D194. Residues 329–399 (RHINWDDLLA…VAPSVLDSIK (71 aa)) enclose the AGC-kinase C-terminal domain. The interval 407 to 485 (KLRSPRRLNS…SKKGRGRSGR (79 aa)) is disordered. S417 is modified (phosphoserine). Position 420 is a phosphothreonine (T420). S423 bears the Phosphoserine mark. Over residues 436 to 469 (SPGPPEPMEPSLPPLLPSPPSPPPTSTAPLPIRP) the composition is skewed to pro residues. A Nuclear localization signal motif is present at residues 474 to 480 (KKSKKGR). Positions 474–485 (KKSKKGRGRSGR) are enriched in basic residues. A Phosphoserine; by PKC modification is found at S476.

The protein belongs to the protein kinase superfamily. AGC Ser/Thr protein kinase family. S6 kinase subfamily. Phosphorylated and activated by MTOR. Phosphorylation by PKC within the NLS in response to mitogenic stimuli causes cytoplasmic retention.

The protein resides in the cytoplasm. It is found in the nucleus. It carries out the reaction L-seryl-[protein] + ATP = O-phospho-L-seryl-[protein] + ADP + H(+). The enzyme catalyses L-threonyl-[protein] + ATP = O-phospho-L-threonyl-[protein] + ADP + H(+). Phosphorylates specifically ribosomal protein S6. Seems to act downstream of mTOR signaling in response to growth factors and nutrients to promote cell proliferation, cell growth and cell cycle progression in an alternative pathway regulated by MEAK7. This is Ribosomal protein S6 kinase beta-2 (Rps6kb2) from Mus musculus (Mouse).